We begin with the raw amino-acid sequence, 188 residues long: Ribosome maturation factor RimM (188 aa).

The region spanning 112 to 187 (SDSYYWVDLI…LLTLDWQSDW (76 aa)) is the PRC barrel domain.

This sequence belongs to the RimM family. In terms of assembly, binds ribosomal protein uS19.

It localises to the cytoplasm. An accessory protein needed during the final step in the assembly of 30S ribosomal subunit, possibly for assembly of the head region. Essential for efficient processing of 16S rRNA. May be needed both before and after RbfA during the maturation of 16S rRNA. It has affinity for free ribosomal 30S subunits but not for 70S ribosomes. This Polynucleobacter asymbioticus (strain DSM 18221 / CIP 109841 / QLW-P1DMWA-1) (Polynucleobacter necessarius subsp. asymbioticus) protein is Ribosome maturation factor RimM.